The sequence spans 528 residues: Capsule biosynthesis protein CapD proenzyme (528 aa).

A signal peptide spans 1-26 (MNSFKWGKKIILFCLIVSLMGGIGVS). Catalysis depends on threonine 352, which acts as the Nucleophile. Poly-gamma-D-glutamate-binding positions include threonine 352, 429–432 (GGNR), and arginine 520.

This sequence belongs to the gamma-glutamyltransferase family. This enzyme consists of two polypeptide chains, which are synthesized in precursor form from a single polypeptide. Post-translationally, cleaved by autocatalysis into a large and a small subunit.

It participates in capsule biogenesis; capsule polysaccharide biosynthesis. In terms of biological role, transpeptidase that cleaves the poly-gamma-D-glutamate capsule and catalyzes the formation of an amide bond with the side-chain amino group of meso-diaminopimelic acid (m-DAP) in the peptidoglycan scaffold. Degradation of the high-molecular weight capsule (H-capsule) to the lower-molecular weight capsule (L-capsule), which is released from the bacterial cell surface. The production of L-capsule is essential to mediate escape from host defenses. The polypeptide is Capsule biosynthesis protein CapD proenzyme (capD) (Bacillus anthracis).